We begin with the raw amino-acid sequence, 61 residues long: MRELKMKLCVLMLPLVVSACGSTPPAPVPCVKPPAPPAWIMQPAPDWQTPLNGIISSSERG.

Positions 1 to 19 (MRELKMKLCVLMLPLVVSA) are cleaved as a signal peptide. The N-palmitoyl cysteine; by host moiety is linked to residue Cys20. The S-diacylglycerol cysteine; by host moiety is linked to residue Cys20.

This sequence belongs to the lambdalikevirus o-spanin family. In terms of assembly, homodimer; disulfide-linked. Interacts (via C-terminus) with RZ (via C-terminus). Part of the spanin complex which spans the entire periplasmic space. The spanin complex is composed of spanin, inner membrane subunit and spanin, outer membrane subunit.

It is found in the host cell outer membrane. Functionally, component of the spanin complex that disrupts the host outer membrane and causes cell lysis during virus exit. The spanin complex conducts the final step in host lysis by disrupting the outer membrane after holin and endolysin action have permeabilized the inner membrane and degraded the host peptidoglycans. The polypeptide is Spanin, outer membrane subunit (Rz1) (Escherichia phage 933W (Bacteriophage 933W)).